The primary structure comprises 1516 residues: Myosin-14 (1516 aa).

The Myosin N-terminal SH3-like domain maps to 7–56 (NVGSCVWVEDPEVAWIDGEVIEVKGSDIKVKCTSGKTVAIKVSSAYPKDV). The Myosin motor domain maps to 61–738 (SGVDDMTRLA…QMADLDARRN (678 aa)). ATP is bound by residues 155-162 (GESGAGKT) and 208-216 (NNNSSRFGK). 4 actin-binding regions span residues 494-528 (LIEK…YQTF), 530-553 (DHKH…AGDV), 588-612 (FPLL…KQQL), and 612-634 (LVTL…KPNN). IQ domains follow at residues 741–770 (LGRA…VATN), 764–793 (LRKV…DAAV), 789–818 (RDAA…AAVS), 812–841 (LYFA…DKAA), 837–866 (QDKA…AAIT), and 860–889 (LKKA…AAKE). The stretch at 890-1056 (TGVLEAAKSK…ENKILRQKSL (167 aa)) forms a coiled coil. The segment at 1061 to 1085 (GHLPPTPVKGSQNGHFSSKESPFNG) is disordered. Residues 1069–1084 (KGSQNGHFSSKESPFN) show a composition bias toward polar residues. In terms of domain architecture, Dilute spans 1158-1463 (DRLVQMIGSA…IANMRVLMTE (306 aa)).

Belongs to the TRAFAC class myosin-kinesin ATPase superfamily. Myosin family. Plant myosin class XI subfamily. In terms of assembly, homodimer.

Myosin heavy chain that is required for the cell cycle-regulated transport of various organelles and proteins for their segregation. Functions by binding with its tail domain to receptor proteins on organelles and exerting force with its N-terminal motor domain against actin filaments, thereby transporting its cargo along polarized actin cables. The chain is Myosin-14 (XI-H) from Arabidopsis thaliana (Mouse-ear cress).